Here is a 150-residue protein sequence, read N- to C-terminus: Large ribosomal subunit protein bL9 (150 aa).

This sequence belongs to the bacterial ribosomal protein bL9 family.

Its function is as follows. Binds to the 23S rRNA. This chain is Large ribosomal subunit protein bL9, found in Shewanella halifaxensis (strain HAW-EB4).